The following is a 586-amino-acid chain: Protein cereblon (586 aa).

2 disordered regions span residues 1 to 114 (MDDE…LPRW) and 158 to 194 (SQER…IDIG). The span at 14–37 (GRDEDVQLEDHSQAQGLQDRRVDA) shows a compositional bias: basic and acidic residues. A compositionally biased stretch (acidic residues) spans 75 to 85 (MVEDGLQDDTA). A compositionally biased stretch (polar residues) spans 86–96 (SEGSHPSSDMS). Residues 159–168 (QERRRSRTSE) are compositionally biased toward basic and acidic residues. Residues 170–179 (TSQEDVEQPE) are compositionally biased toward acidic residues. The span at 180–190 (DPPPQQPPRPP) shows a compositional bias: pro residues. One can recognise a Lon N-terminal domain in the interval 226–452 (HMLIFLHQHI…LIKSTFTDES (227 aa)). A CULT domain is found at 451-560 (ESLFFCRYCN…LAGSSVRIGK (110 aa)). Zn(2+)-binding residues include Cys-456, Cys-459, Cys-525, and Cys-528.

It belongs to the CRBN family. Likely a component of a DCX (DDB1-CUL4-X-box) protein ligase complex. May interact with pic/DDB1. Post-translationally, ubiquitinated.

It localises to the nucleus. The protein operates within protein modification; protein ubiquitination. In terms of biological role, substrate recognition component of a DCX (DDB1-CUL4-X-box) E3 protein ligase complex that mediates the ubiquitination and subsequent proteasomal degradation of target proteins. Has an essential role in mediating growth by negatively regulating insulin signaling. It also has a role in maintaining presynaptic function in the neuromuscular junction synapses of third-instar larvae. This chain is Protein cereblon, found in Drosophila erecta (Fruit fly).